Here is a 2543-residue protein sequence, read N- to C-terminus: Polyketide synthase PksR (2543 aa).

The segment at 165-269 (LEIGAGTGGT…KAVLKKNGLL (105 aa)) is methyltransferase. The region spanning 376 to 452 (SLIEQTAQFV…ELVEYLVKGH (77 aa)) is the Carrier 1 domain. Ser-413 bears the O-(pantetheine 4'-phosphoryl)serine mark. Positions 465 to 485 (TKPAKNEAPLQTERTDPNKPF) are disordered. A Ketosynthase family 3 (KS3) 1 domain is found at 527 to 959 (TEDIAIIGVS…GAYANLIIEE (433 aa)). Cys-700 acts as the For beta-ketoacyl synthase 1 activity in catalysis. The segment at 1114–1242 (HFDVSSINEK…GQCGIGSFEP (129 aa)) is N-terminal hotdog fold. Residues 1114-1397 (HFDVSSINEK…LKQLRISNQR (284 aa)) enclose the PKS/mFAS DH domain. A C-terminal hotdog fold region spans residues 1255–1397 (TKLHHIDQMY…LKQLRISNQR (143 aa)). The region spanning 1407–1485 (SNLKARIRSY…ELIDFFADKH (79 aa)) is the Carrier 2 domain. Ser-1445 is subject to O-(pantetheine 4'-phosphoryl)serine. The Ketosynthase family 3 (KS3) 2 domain occupies 1528–1946 (ADGIAIIGMS…GVNAHVILEE (419 aa)). Active-site for beta-ketoacyl synthase 2 activity residues include Cys-1680, His-1815, and His-1862. Residues 2134 to 2208 (RINNSSDHHI…DMMDLIAKKQ (75 aa)) form the Carrier 3 domain. An O-(pantetheine 4'-phosphoryl)serine modification is found at Ser-2168. The interval 2234-2514 (RPVFWFHGGV…EFCEKLYSNR (281 aa)) is thioesterase.

Requires pantetheine 4'-phosphate as cofactor.

The protein localises to the cytoplasm. It functions in the pathway antibiotic biosynthesis; bacillaene biosynthesis. Its function is as follows. Involved in some intermediate steps for the synthesis of the antibiotic polyketide bacillaene which is involved in secondary metabolism. In Bacillus subtilis (strain 168), this protein is Polyketide synthase PksR (pksR).